A 611-amino-acid polypeptide reads, in one-letter code: Glutamine--fructose-6-phosphate aminotransferase [isomerizing] (611 aa).

Cysteine 2 acts as the Nucleophile; for GATase activity in catalysis. One can recognise a Glutamine amidotransferase type-2 domain in the interval 2 to 219 (CGIVGAVAER…EGDIAEIRRD (218 aa)). SIS domains are found at residues 287-427 (AADL…VRGT) and 460-601 (IAEL…VDQP). Lysine 606 functions as the For Fru-6P isomerization activity in the catalytic mechanism.

As to quaternary structure, homodimer.

Its subcellular location is the cytoplasm. It catalyses the reaction D-fructose 6-phosphate + L-glutamine = D-glucosamine 6-phosphate + L-glutamate. Its function is as follows. Catalyzes the first step in hexosamine metabolism, converting fructose-6P into glucosamine-6P using glutamine as a nitrogen source. The chain is Glutamine--fructose-6-phosphate aminotransferase [isomerizing] from Pseudomonas putida (strain ATCC 47054 / DSM 6125 / CFBP 8728 / NCIMB 11950 / KT2440).